The following is a 562-amino-acid chain: Ribonuclease Y (562 aa).

Residues 1–21 traverse the membrane as a helical segment; it reads MNMLYFVLALLVGLAGGFFVG. The segment at 108–129 is disordered; sequence AAQDAARERETLSADRQETRRE. The KH domain occupies 252 to 312; sequence SVSVVPIPND…VRREVARHVL (61 aa). The 94-residue stretch at 378–471 folds into the HD domain; the sequence is VLKHSVQVAH…VAAADAISAA (94 aa).

It belongs to the RNase Y family.

The protein resides in the cell membrane. Endoribonuclease that initiates mRNA decay. This Deinococcus geothermalis (strain DSM 11300 / CIP 105573 / AG-3a) protein is Ribonuclease Y.